The following is a 486-amino-acid chain: ATP synthase subunit beta (486 aa).

164-171 (GGAGVGKT) is a binding site for ATP.

This sequence belongs to the ATPase alpha/beta chains family. In terms of assembly, F-type ATPases have 2 components, CF(1) - the catalytic core - and CF(0) - the membrane proton channel. CF(1) has five subunits: alpha(3), beta(3), gamma(1), delta(1), epsilon(1). CF(0) has four main subunits: a(1), b(1), b'(1) and c(9-12).

The protein localises to the cellular thylakoid membrane. It carries out the reaction ATP + H2O + 4 H(+)(in) = ADP + phosphate + 5 H(+)(out). In terms of biological role, produces ATP from ADP in the presence of a proton gradient across the membrane. The catalytic sites are hosted primarily by the beta subunits. The chain is ATP synthase subunit beta from Prochlorococcus marinus subsp. pastoris (strain CCMP1986 / NIES-2087 / MED4).